The sequence spans 441 residues: L-seryl-tRNA(Sec) selenium transferase (441 aa).

Position 283 is an N6-(pyridoxal phosphate)lysine (lysine 283).

The protein belongs to the SelA family. It depends on pyridoxal 5'-phosphate as a cofactor.

The protein localises to the cytoplasm. The catalysed reaction is L-seryl-tRNA(Sec) + selenophosphate + H(+) = L-selenocysteinyl-tRNA(Sec) + phosphate. The protein operates within aminoacyl-tRNA biosynthesis; selenocysteinyl-tRNA(Sec) biosynthesis; selenocysteinyl-tRNA(Sec) from L-seryl-tRNA(Sec) (bacterial route): step 1/1. Its function is as follows. Converts seryl-tRNA(Sec) to selenocysteinyl-tRNA(Sec) required for selenoprotein biosynthesis. This chain is L-seryl-tRNA(Sec) selenium transferase, found in Campylobacter concisus (strain 13826).